We begin with the raw amino-acid sequence, 284 residues long: Protein phosphatase 1 regulatory subunit 3B (284 aa).

A PP1-binding motif motif is present at residues 61–64 (RVSF). Positions 124-232 (RNRLQTNHVC…SNKGKNYRIT (109 aa)) constitute a CBM21 domain. S260 carries the phosphoserine modification.

Interacts with glycogen, PPP1CC catalytic subunit of PP1 and PYGL. Associates with glycogen particles. Forms complexes with debranching enzyme, glycogen phosphorylase, glycogen synthase and phosphorylase kinase which is necessary for its regulation of PP1 activity. In terms of tissue distribution, highly expressed in liver. Moderately expressed in kidney, heart, testis, spleen and lung. Weakly expressed in skeletal muscle (at protein level). Expressed predominantly in liver. Expressed moderately in heart. Expressed weakly in lung, kidney, spleen and skeletal muscle.

In terms of biological role, acts as a glycogen-targeting subunit for phosphatase PP1. Facilitates interaction of the PP1 with enzymes of the glycogen metabolism and regulates its activity. Suppresses the rate at which PP1 dephosphorylates (inactivates) glycogen phosphorylase and enhances the rate at which it activates glycogen synthase and therefore limits glycogen breakdown. Its activity is inhibited by PYGL, resulting in inhibition of the glycogen synthase and glycogen phosphorylase phosphatase activities of PP1. Dramatically increases basal and insulin-stimulated glycogen synthesis upon overexpression in hepatocytes. The sequence is that of Protein phosphatase 1 regulatory subunit 3B (Ppp1r3b) from Rattus norvegicus (Rat).